The primary structure comprises 956 residues: Phosphatidylinositol 4-kinase PIK1a (956 aa).

The PIK helical domain occupies methionine 1–leucine 120. The tract at residues serine 545–serine 573 is disordered. One can recognise a PI3K/PI4K catalytic domain in the interval glutamate 658–methionine 939. A G-loop region spans residues lysine 664 to serine 670. Residues glutamine 805–asparagine 813 form a catalytic loop region. The tract at residues histidine 824–threonine 848 is activation loop.

The protein belongs to the PI3/PI4-kinase family. Type III PI4K subfamily.

It localises to the nucleus. The enzyme catalyses a 1,2-diacyl-sn-glycero-3-phospho-(1D-myo-inositol) + ATP = a 1,2-diacyl-sn-glycero-3-phospho-(1D-myo-inositol 4-phosphate) + ADP + H(+). Functionally, acts on phosphatidylinositol (PI) in the first committed step in the production of the second messenger inositol 1,4,5,-trisphosphate. The sequence is that of Phosphatidylinositol 4-kinase PIK1a (PIKA) from Candida albicans (strain SC5314 / ATCC MYA-2876) (Yeast).